A 272-amino-acid polypeptide reads, in one-letter code: Phosphonates import ATP-binding protein PhnC (272 aa).

One can recognise an ABC transporter domain in the interval 2–244 (LVFDKVNRVY…IQKRLYEIEH (243 aa)). 35–42 (GPSGAGKS) contacts ATP.

This sequence belongs to the ABC transporter superfamily. Phosphonates importer (TC 3.A.1.9.1) family. In terms of assembly, the complex is composed of two ATP-binding proteins (PhnC), two transmembrane proteins (PhnE) and a solute-binding protein (PhnD).

It localises to the cell inner membrane. The enzyme catalyses phosphonate(out) + ATP + H2O = phosphonate(in) + ADP + phosphate + H(+). Functionally, part of the ABC transporter complex PhnCDE involved in phosphonates import. Responsible for energy coupling to the transport system. The protein is Phosphonates import ATP-binding protein PhnC of Hydrogenovibrio crunogenus (strain DSM 25203 / XCL-2) (Thiomicrospira crunogena).